The sequence spans 374 residues: Tuliposide A-converting enzyme b1, amyloplastic (374 aa).

Residues Met1–Thr68 constitute an amyloplast transit peptide. The Acyl-ester intermediate role is filled by Ser226. Catalysis depends on charge relay system residues Asp316 and His348.

Belongs to the AB hydrolase superfamily. As to quaternary structure, homodimer. As to expression, highly expressed in pistil and bulb scales. Lower expression in stem, and barely detected in root, leaf, petal and stamen.

It localises to the plastid. It is found in the amyloplast. It catalyses the reaction 6-tuliposide A = tulipalin A + D-glucose. Functionally, lactone-forming carboxylesterases, specifically catalyzing intramolecular transesterification, but not hydrolysis. Involved in the biosynthesis of tulipalins, defensive chemicals that show antimicrobial activities against a broad range of strains of bacteria and fungi. Substrates are 6-tuliposide A &gt; 6-tuliposide B. This Tulipa gesneriana (Garden tulip) protein is Tuliposide A-converting enzyme b1, amyloplastic (TCEA-B1).